Here is a 426-residue protein sequence, read N- to C-terminus: Anhydromevalonate phosphate decarboxylase (426 aa).

Residues asparagine 148 and glutamate 211 each coordinate Mn(2+). The active-site Proton acceptor is aspartate 255.

Belongs to the UbiD family. Prenylated FMN serves as cofactor. Mn(2+) is required as a cofactor.

It catalyses the reaction (2E)-3-methyl-5-phosphooxypent-2-enoate + H(+) = isopentenyl phosphate + CO2. It participates in isoprenoid biosynthesis; isopentenyl diphosphate biosynthesis via mevalonate pathway. Functionally, catalyzes the conversion of trans-anhydromevalonate 5-phosphate (tAHMP) into isopentenyl phosphate. Involved in the archaeal mevalonate (MVA) pathway, which provides fundamental precursors for isoprenoid biosynthesis, such as isopentenyl diphosphate (IPP) and dimethylallyl diphosphate (DMAPP). The sequence is that of Anhydromevalonate phosphate decarboxylase from Archaeoglobus fulgidus (strain ATCC 49558 / DSM 4304 / JCM 9628 / NBRC 100126 / VC-16).